We begin with the raw amino-acid sequence, 148 residues long: Probable calcium-binding protein CML14 (148 aa).

EF-hand domains are found at residues 9–44 (DQVS…LGGN), 80–115 (PFDR…IGEK), and 116–148 (LQPS…MVAK). Ca(2+) is bound by residues aspartate 22, aspartate 24, aspartate 26, lysine 28, and glutamate 33.

Its function is as follows. Potential calcium sensor. The chain is Probable calcium-binding protein CML14 (CML14) from Arabidopsis thaliana (Mouse-ear cress).